Consider the following 211-residue polypeptide: Redox-sensing transcriptional repressor Rex (211 aa).

Positions 17 to 56 form a DNA-binding region, H-T-H motif; sequence LYYRLVSILKGKGIDRVNSKTISEALQIDSATIRRDFSYF. 91–96 is a binding site for NAD(+); the sequence is GIGNLG.

This sequence belongs to the transcriptional regulatory Rex family. As to quaternary structure, homodimer.

Its subcellular location is the cytoplasm. Its function is as follows. Modulates transcription in response to changes in cellular NADH/NAD(+) redox state. This Staphylococcus epidermidis (strain ATCC 12228 / FDA PCI 1200) protein is Redox-sensing transcriptional repressor Rex.